The chain runs to 602 residues: Fumarate reductase flavoprotein subunit (602 aa).

FAD contacts are provided by residues 12 to 16 (GAGGA), 36 to 38 (ISK), 44 to 52 (SHTVAAEGG), 156 to 158 (HFV), 192 to 193 (AT), and Asp-212. His-45 is subject to Tele-8alpha-FAD histidine. Catalysis depends on residues His-233 and Arg-249. FAD-binding positions include 356-357 (HY), Glu-380, and 391-397 (RLGSNSL). The tract at residues 581–602 (YGGEADAADKAEAANKKEKANG) is disordered. Over residues 587-602 (AADKAEAANKKEKANG) the composition is skewed to basic and acidic residues.

This sequence belongs to the FAD-dependent oxidoreductase 2 family. FRD/SDH subfamily. In terms of assembly, part of an enzyme complex containing four subunits: a flavoprotein (FrdA), an iron-sulfur protein (FrdB), and two hydrophobic anchor proteins (FrdC and FrdD). Can be cross-linked to SdhE. Purified from membrane fractions associated with protoporphyrinogen IX dehydrogenase (hemG). FAD is required as a cofactor.

Its subcellular location is the cell inner membrane. The catalysed reaction is a quinone + succinate = fumarate + a quinol. It carries out the reaction a menaquinone + succinate = a menaquinol + fumarate. Inhibited by oxaloacetate, a substrate analog. Two distinct, membrane-bound, FAD-containing enzymes are responsible for the catalysis of fumarate and succinate interconversion; fumarate reductase is used during anaerobic growth, and succinate dehydrogenase is used during aerobic growth. The QFR enzyme complex binds 2 quinones in or near the membrane; 1 near the [3Fe-4S] cluster (QP is proximal to the [3Fe-4S] cluster, on the cytoplasmic side of the membrane) while QD (the distal cluster) is on the other side of the membrane. It is not clear if both of the quinol-binding sites are functionally relevant. The chain is Fumarate reductase flavoprotein subunit (frdA) from Escherichia coli (strain K12).